Here is a 485-residue protein sequence, read N- to C-terminus: 3-isopropylmalate dehydratase large subunit (485 aa).

Disordered stretches follow at residues 1–20 (MSDA…QSTG) and 73–92 (PERT…RSLP). Residues cysteine 364, cysteine 424, and cysteine 427 each coordinate [4Fe-4S] cluster.

The protein belongs to the aconitase/IPM isomerase family. LeuC type 1 subfamily. In terms of assembly, heterodimer of LeuC and LeuD. It depends on [4Fe-4S] cluster as a cofactor.

It catalyses the reaction (2R,3S)-3-isopropylmalate = (2S)-2-isopropylmalate. The protein operates within amino-acid biosynthesis; L-leucine biosynthesis; L-leucine from 3-methyl-2-oxobutanoate: step 2/4. Functionally, catalyzes the isomerization between 2-isopropylmalate and 3-isopropylmalate, via the formation of 2-isopropylmaleate. This Rhodopirellula baltica (strain DSM 10527 / NCIMB 13988 / SH1) protein is 3-isopropylmalate dehydratase large subunit.